A 429-amino-acid chain; its full sequence is Glucose-1-phosphate adenylyltransferase (429 aa).

Residues glycine 162, 177-178, and serine 209 each bind alpha-D-glucose 1-phosphate; that span reads EK.

It belongs to the bacterial/plant glucose-1-phosphate adenylyltransferase family. As to quaternary structure, homotetramer.

The enzyme catalyses alpha-D-glucose 1-phosphate + ATP + H(+) = ADP-alpha-D-glucose + diphosphate. Its pathway is glycan biosynthesis; glycogen biosynthesis. Its function is as follows. Involved in the biosynthesis of ADP-glucose, a building block required for the elongation reactions to produce glycogen. Catalyzes the reaction between ATP and alpha-D-glucose 1-phosphate (G1P) to produce pyrophosphate and ADP-Glc. This is Glucose-1-phosphate adenylyltransferase from Trichormus variabilis (strain ATCC 29413 / PCC 7937) (Anabaena variabilis).